Here is a 431-residue protein sequence, read N- to C-terminus: MILIDDIKYACMECVRGHRSSSCKHHERPLLQVRSKGRPGVYANGNPNHRVAIFAEEIAKSDKPSTNGTKRCKSEPIIVLKASSKQVIDCSSGVIIGPYDETKTKPSTVEKRTPSPPIISDESFINTSACCTPKISKGKSCGCCNNKRKAVNKSKILQNYIKNKLNQKINNNETLVFMNKSHTTNNEQKEDHQLYGMVPVPSCSIPGTCCCDDACSCQGCVVHGNSKYQIPLPTSKQQVTDTTNPFENEEKFIFNSMPQTDKSDLFFNTISTSSNVPPADSSSECSCPPNACDCTNCETHGILNGFRLDDYFKDQSKLMNVLDFNFSELLGTIPEQPIPTEFMQPPSENTLLTSLSSENSFIPNQTKELSTQPPILPLDAQNVCNELDQLEPLVPSLQPCDKKATKWVNNRDTLEDVSDNRVKSCCSKKTK.

Positions 1-40 (MILIDDIKYACMECVRGHRSSSCKHHERPLLQVRSKGRPG) form a DNA-binding region, copper-fist. Zn(2+)-binding residues include cysteine 11, cysteine 14, cysteine 23, and histidine 25.

Its subcellular location is the nucleus. Its function is as follows. Copper ion-sensing transcription factor which activates transcription of the CTR1 copper transporter under low-copper conditions. Promotes filamentous and invasive growth. The protein is Metal-binding activator 1 (MAC1) of Candida albicans (strain SC5314 / ATCC MYA-2876) (Yeast).